Here is a 597-residue protein sequence, read N- to C-terminus: FERM domain-containing protein 3 (597 aa).

The FERM domain maps to methionine 32–lysine 312. The interval leucine 383–proline 403 is disordered. The helical transmembrane segment at leucine 531–glutamate 551 threads the bilayer.

Ovary-specific.

It is found in the membrane. Functionally, putative tumor suppressor gene that may be implicated in the origin and progression of lung cancer. In Homo sapiens (Human), this protein is FERM domain-containing protein 3 (FRMD3).